The primary structure comprises 27 residues: Zinc metalloproteinase multactivase catalytic subunit (27 aa).

Positions 12–27 (FIELVIIVDHSXXTYK) constitute a Peptidase M12B domain. Residue E14 participates in Ca(2+) binding.

This sequence belongs to the venom metalloproteinase (M12B) family. P-III subfamily. P-IIId sub-subfamily. As to quaternary structure, heterodimer of a metalloproteinase subunit and a regulatory subunit comprising two homologous disulfide-linked lectins (AC P81798). Zn(2+) is required as a cofactor. Expressed by the venom gland.

Its subcellular location is the secreted. Functionally, this carinactivase-like calcium-dependent prothrombin (F2) activator activates prothrombin via recognition of the calcium ion bound conformation of its gamma-carboxyglutamic acid (GLA) domain, and the subsequent conversion of prothrombin to active thrombin is catalyzed by the catalytic subunit. This is Zinc metalloproteinase multactivase catalytic subunit from Echis multisquamatus (Central Asian sand viper).